Here is a 492-residue protein sequence, read N- to C-terminus: Putative heme-binding protein VNG_2021C (492 aa).

Residue H177 participates in heme binding. Residues 253–301 are disordered; sequence AGERVPAPEGGADAHGEGERTHHHGDSDHHDGDDGEQHHHSTGDEADDG. Residues 264 to 301 are compositionally biased toward basic and acidic residues; the sequence is ADAHGEGERTHHHGDSDHHDGDDGEQHHHSTGDEADDG. An ABM domain is found at 402–490; sequence GTMGMFYETK…VLADRPRHVF (89 aa).

It in the N-terminal section; belongs to the ChdC family.

The polypeptide is Putative heme-binding protein VNG_2021C (Halobacterium salinarum (strain ATCC 700922 / JCM 11081 / NRC-1) (Halobacterium halobium)).